The sequence spans 2349 residues: Reducing polyketide synthase hmp8 (2349 aa).

The 427-residue stretch at 9–435 (HVPVAIIGLA…GTNGHVVLEA (427 aa)) folds into the Ketosynthase family 3 (KS3) domain. Catalysis depends on for beta-ketoacyl synthase activity residues Cys-182, His-317, and His-357. The malonyl-CoA:ACP transacylase (MAT) domain stretch occupies residues 551-856 (FVFTGQGAQW…SHNGIKNVAY (306 aa)). An N-terminal hotdog fold region spans residues 930–1066 (RSLIGAPVPM…GLVAIDYEES (137 aa)). Residues 930–1250 (RSLIGAPVPM…TSELDMDSGK (321 aa)) enclose the PKS/mFAS DH domain. A dehydratase (DH) domain region spans residues 932 to 1244 (LIGAPVPMMA…SVKDFRTSEL (313 aa)). His-962 serves as the catalytic Proton acceptor; for dehydratase activity. Residues 1094–1250 (PEHYAHDKFY…TSELDMDSGK (157 aa)) form a C-terminal hotdog fold region. Residue Asp-1160 is the Proton donor; for dehydratase activity of the active site. The segment at 1641-1953 (GLLDTLKFVP…QGKHRGKMVL (313 aa)) is enoyl reductase (ER) domain. A ketoreductase (KR) domain region spans residues 1977–2157 (ATYLFVGGLG…ISVNLGIMRD (181 aa)). A Carrier domain is found at 2267–2344 (EAAEIITDAL…SFAVKIAEKS (78 aa)). Ser-2304 carries the O-(pantetheine 4'-phosphoryl)serine modification.

It functions in the pathway secondary metabolite biosynthesis. Functionally, reducing polyketide synthase; part of the gene cluster that mediates the biosynthesis of hypothemycin, a resorcylic acid lactone (RAL) that irreversibly inhibits a subset of protein kinases with a conserved cysteine in the ATP binding site such as human ERK2. The first step is performed by both PKSs hmp3 and hmp8 and leads to the production of 7',8'-dehydrozearalenol (DHZ). The highly reducing PKS hpm8 synthesizes the reduced hexaketide (7S,11S,2E,8E)-7,11-dihydroxy-dodeca-2,8-dienoate, which is transferred downstream to the non-reducing PKS hpm3. Hpm3 then extends the reduced hexaketide to a nonaketide, after which regioselective cyclization and macrolactonization affords DHZ. The next step is the conversion of DHZ into aigialomycin C and is performed by the O-methyltransferase hmp5, the FAD-binding monooxygenase hmp7, and the cytochrome P450 monooxygenase hmp1. The wide substrate tolerance of the hmp5 and hmp7 implies that the reactions from DHZ to aigialomycin C can occur in any order. The steps from aigialomycin C to hypothemycin are less well established. The FAD-linked oxidoreductase hmp9 presumably catalyzes oxidation of the C-6' hydroxyl to a ketone. The timing of this oxidation is important, since the resulting enone functional group is a Michael acceptor that can react spontaneously with glutathione, an abundant metabolite in fungal cells. The glutathione S-transferase hmp2 catalyzes cis-trans isomerization of the 7',8' double bond with equilibrium favoring the trans isomer. The hpm6-encoded transporter might preferentially pump hypothemycin out of the cell relative to the trans isomer aigialomycin A. The cis-to-trans isomerization may be coupled with C-4' hydroxylation, since all known hypothemycin analogs containing the enone functional group also have hydroxyl groups at both C-4' and C-5'. The polypeptide is Reducing polyketide synthase hmp8 (Hypomyces subiculosus (Nectria subiculosa)).